A 599-amino-acid polypeptide reads, in one-letter code: Tail knob protein gp9 (599 aa).

The protein belongs to the picovirinae distal tube protein family. As to quaternary structure, homohexamer; forms a hexameric tube structure with six flexible hydrophobic loops.

It is found in the virion. Its function is as follows. Distal (knob) tail protein that plugs the end of the tube before DNA ejection and forms a channel perforating the host membrane during ejection. In Bacillus phage PZA (Bacteriophage PZA), this protein is Tail knob protein gp9 (9).